A 360-amino-acid polypeptide reads, in one-letter code: MDLSATLNSLVSKGVSGQAPTRDEALAVLRSDDDDLLDVVAAAYRLRRRYFGRRVKLNFLVNLKSGLCPEDCSYCSQRLGSNTGILKYTWLKPEEAAATAGAGISGGARRVCLVASGRGPTDRDVDRVADTIGAIKTAHPDVEVCACLGLLSDGQAAQLRAAGADAYNHNLNTAGEKYADICTTHTYNDRVDTVQEARHAGLSPCSGIIAGMGESDEDLVDVAFALRELAPDSIPVNFLMPFEGTPLGAEWNLNPRQCLRILAMVRFVNPTAEVRLSGGREIHLGSMQPLALSVVNSIFLGDYLTSEGQEGHQDLKMIAEAGFTVEGLNTDAEAALAMGAGLERVALRQRGAGTDLPPNA.

The Radical SAM core domain maps to 53-280 (RRVKLNFLVN…TAEVRLSGGR (228 aa)). [4Fe-4S] cluster-binding residues include cysteine 68, cysteine 72, and cysteine 75. Residues cysteine 112, cysteine 145, cysteine 205, and arginine 275 each coordinate [2Fe-2S] cluster.

Belongs to the radical SAM superfamily. Biotin synthase family. Homodimer. Requires [4Fe-4S] cluster as cofactor. [2Fe-2S] cluster serves as cofactor.

It carries out the reaction (4R,5S)-dethiobiotin + (sulfur carrier)-SH + 2 reduced [2Fe-2S]-[ferredoxin] + 2 S-adenosyl-L-methionine = (sulfur carrier)-H + biotin + 2 5'-deoxyadenosine + 2 L-methionine + 2 oxidized [2Fe-2S]-[ferredoxin]. Its pathway is cofactor biosynthesis; biotin biosynthesis; biotin from 7,8-diaminononanoate: step 2/2. Functionally, catalyzes the conversion of dethiobiotin (DTB) to biotin by the insertion of a sulfur atom into dethiobiotin via a radical-based mechanism. This Frankia casuarinae (strain DSM 45818 / CECT 9043 / HFP020203 / CcI3) protein is Biotin synthase 2.